The following is a 470-amino-acid chain: Methylenetetrahydrofolate--tRNA-(uracil-5-)-methyltransferase TrmFO (470 aa).

10–15 (GAGLAG) lines the FAD pocket.

The protein belongs to the MnmG family. TrmFO subfamily. Requires FAD as cofactor.

The protein resides in the cytoplasm. It carries out the reaction uridine(54) in tRNA + (6R)-5,10-methylene-5,6,7,8-tetrahydrofolate + NADH + H(+) = 5-methyluridine(54) in tRNA + (6S)-5,6,7,8-tetrahydrofolate + NAD(+). The enzyme catalyses uridine(54) in tRNA + (6R)-5,10-methylene-5,6,7,8-tetrahydrofolate + NADPH + H(+) = 5-methyluridine(54) in tRNA + (6S)-5,6,7,8-tetrahydrofolate + NADP(+). Functionally, catalyzes the folate-dependent formation of 5-methyl-uridine at position 54 (M-5-U54) in all tRNAs. This is Methylenetetrahydrofolate--tRNA-(uracil-5-)-methyltransferase TrmFO from Prochlorococcus marinus (strain MIT 9301).